The chain runs to 328 residues: MCHQQLVISWFSLVFLASPLVAIWELKKDVYVVELDWYPDAPGEMVVLTCDTPEEDGITWTLDQSSEVLGSGKTLTIQVKEFGDAGQYTCHKGGEVLSHSLLLLHKKEDGIWSTDILKDQKEPKNKTFLRCEAKNYSGRFTCWWLTTISTDLTFSVKSSRGSSDPQGVTCGAATLSAERVRGDNKEYEYSVECQEDSACPAAEESLPIEVMVDAVHKLKYENYTSSFFIRDIIKPDPPKNLQLKPLKNSRQVEVSWEYPDTWSTPHSYFSLTFCVQVQGKSKREKKDRVFTDKTSATVICRKNASISVRAQDRYYSSSWSEWASVPCS.

The signal sequence occupies residues 1-22 (MCHQQLVISWFSLVFLASPLVA). The Ig-like C2-type domain occupies 23 to 106 (IWELKKDVYV…LSHSLLLLHK (84 aa)). Disulfide bonds link cysteine 50–cysteine 90, cysteine 131–cysteine 142, and cysteine 170–cysteine 193. A glycan (N-linked (GlcNAc...) asparagine) is linked at asparagine 135. Asparagine 222 carries an N-linked (GlcNAc...) asparagine glycan. A Fibronectin type-III domain is found at 237-328 (PPKNLQLKPL…WSEWASVPCS (92 aa)). Cysteine 300 and cysteine 327 are oxidised to a cystine. A C-linked (Man) tryptophan glycan is attached at tryptophan 319.

It belongs to the IL-12B family. In terms of assembly, heterodimer with IL12A; disulfide-linked. The heterodimer is known as interleukin IL-12. Heterodimer with IL23A; disulfide-linked. The heterodimer is known as interleukin IL-23. Also secreted as a monomer. Interacts with NBR1; this interaction promotes IL-12 secretion. Post-translationally, known to be C-mannosylated in the recombinant protein; it is not yet known for sure if the wild-type protein is also modified.

Its subcellular location is the secreted. In terms of biological role, cytokine that can act as a growth factor for activated T and NK cells, enhance the lytic activity of NK/lymphokine-activated killer cells, and stimulate the production of IFN-gamma by resting PBMC. Functionally, associates with IL23A to form the IL-23 interleukin, a heterodimeric cytokine which functions in innate and adaptive immunity. IL-23 may constitute with IL-17 an acute response to infection in peripheral tissues. IL-23 binds to a heterodimeric receptor complex composed of IL12RB1 and IL23R, activates the Jak-Stat signaling cascade, stimulates memory rather than naive T-cells and promotes production of pro-inflammatory cytokines. IL-23 induces autoimmune inflammation and thus may be responsible for autoimmune inflammatory diseases and may be important for tumorigenesis. The sequence is that of Interleukin-12 subunit beta (IL12B) from Homo sapiens (Human).